The following is a 361-amino-acid chain: Aurora kinase B-A (361 aa).

One can recognise a Protein kinase domain in the interval phenylalanine 93–valine 343. Residues leucine 99 to valine 107 and lysine 122 each bind ATP. The active-site Proton acceptor is aspartate 216.

This sequence belongs to the protein kinase superfamily. Ser/Thr protein kinase family. Aurora subfamily. Component of the CPC at least composed of survivin/birc5, incenp, cdca8/borealin and/or cdca9/dasra-A, and aurkb/aurora-B. Interacts directly (via N-terminus and kinase domain) with incenp (via C terminus), and may weakly interact (via N-terminus) with birc5.1 to stabilize the complex. Interacts with mtus1. Mg(2+) is required as a cofactor. Post-translationally, phosphorylated, stimulates kinase activity.

The protein resides in the nucleus. It is found in the chromosome. It catalyses the reaction L-seryl-[protein] + ATP = O-phospho-L-seryl-[protein] + ADP + H(+). The enzyme catalyses L-threonyl-[protein] + ATP = O-phospho-L-threonyl-[protein] + ADP + H(+). With respect to regulation, kinase activity is stimulated by both birc5/survivin-binding and cell-cycle specific phosphorylation. Functionally, serine/threonine-protein kinase component of the chromosomal passenger complex (CPC), a complex that acts as a key regulator of mitosis. The CPC complex has essential functions at the centromere in ensuring correct chromosome alignment and segregation and is required for chromatin-induced microtubule stabilization and spindle assembly. Involved in the bipolar attachment of spindle microtubules to kinetochores and is a key regulator for the onset of cytokinesis during mitosis. Required for central/midzone spindle assembly and cleavage furrow formation. Key component of the cytokinesis checkpoint, a process required to delay abscission to prevent both premature resolution of intercellular chromosome bridges and accumulation of DNA damage. Phosphorylates 'Ser-10' of histone H3 during mitosis. The polypeptide is Aurora kinase B-A (aurkb-a) (Xenopus laevis (African clawed frog)).